The chain runs to 98 residues: Protein Frey 1 (98 aa).

The helical transmembrane segment at 13–29 threads the bilayer; it reads AGLSLFLHLILAVALLR. The segment at 60-87 is disordered; that stretch reads YGILPKHPRPRGPRPLLSRAQQRKRDGP.

Interacts with SPPL2C (via active sites); the interaction stabilizes FREY1 protein and inhibits SPPL2C proteolytic activity. Interacts with IZUMO1; the interaction retains IZUMO1 at the endoplasmic reticulum membrane and coordinates IZUMO1 complex assembly.

The protein localises to the endoplasmic reticulum membrane. Functionally, key regulator for male fertility expressed transiently in round spermatids where it recruits IZUMO1 at the endoplasmic reticulum (ER) membrane and coordinates the oolemmal binding multimeric complex (IZUMO1 complex) assembly. Upon complete assembly of the IZUMO1 complex, its ER retention is released, facilitating IZUMO1 complex export to the acrosome. Through the interaction with SPPL2C, inhibits its intramembrane protease activity directly accessing the catalytic center of an I-CLiP. This chain is Protein Frey 1, found in Homo sapiens (Human).